The chain runs to 320 residues: Cytochrome c1-1, heme protein, mitochondrial (320 aa).

The N-terminal 77 residues, 1–77 (MSLGKKIRIG…LLSFATIAYS (77 aa)), are a transit peptide targeting the mitochondrion. Residues 78–280 (DEAEHGLECP…WAAEPEMEER (203 aa)) are Mitochondrial intermembrane-facing. A Cytochrome c domain is found at 103 to 210 (ASIRRGHQVY…NGQNYVFALL (108 aa)). Positions 116, 119, 120, and 239 each coordinate heme c. A helical transmembrane segment spans residues 281–301 (KLMGFKWIFVLSLALLQAAYY). Topologically, residues 302–320 (RRLRWSVLKSRKLVLDVVN) are mitochondrial matrix.

It belongs to the cytochrome c family. In terms of assembly, component of the ubiquinol-cytochrome c oxidoreductase (cytochrome b-c1 complex, complex III, CIII), a multisubunit enzyme composed of 3 respiratory subunits cytochrome b, cytochrome c1 and Rieske protein, 2 core protein subunits, and additional low-molecular weight protein subunits. The complex exists as an obligatory dimer and forms supercomplexes (SCs) in the inner mitochondrial membrane with cytochrome c oxidase (complex IV, CIV). It depends on heme c as a cofactor. In all tissues analyzed.

It is found in the mitochondrion inner membrane. The enzyme catalyses a quinol + 2 Fe(III)-[cytochrome c](out) = a quinone + 2 Fe(II)-[cytochrome c](out) + 2 H(+)(out). Functionally, component of the ubiquinol-cytochrome c oxidoreductase, a multisubunit transmembrane complex that is part of the mitochondrial electron transport chain which drives oxidative phosphorylation. The respiratory chain contains 3 multisubunit complexes succinate dehydrogenase (complex II, CII), ubiquinol-cytochrome c oxidoreductase (cytochrome b-c1 complex, complex III, CIII) and cytochrome c oxidase (complex IV, CIV), that cooperate to transfer electrons derived from NADH and succinate to molecular oxygen, creating an electrochemical gradient over the inner membrane that drives transmembrane transport and the ATP synthase. The cytochrome b-c1 complex catalyzes electron transfer from ubiquinol to cytochrome c, linking this redox reaction to translocation of protons across the mitochondrial inner membrane, with protons being carried across the membrane as hydrogens on the quinol. In the process called Q cycle, 2 protons are consumed from the matrix, 4 protons are released into the intermembrane space and 2 electrons are passed to cytochrome c. Cytochrome c1 is a catalytic core subunit containing a c-type heme. It transfers electrons from the [2Fe-2S] iron-sulfur cluster of the Rieske protein to cytochrome c. This Solanum tuberosum (Potato) protein is Cytochrome c1-1, heme protein, mitochondrial (CYCL).